The chain runs to 317 residues: Melanocyte-stimulating hormone receptor (317 aa).

At 1–37 the chain is on the extracellular side; sequence MPMQGAQRRLLGSLNSTPTATPNLGLAANHTGAPCLE. An N-linked (GlcNAc...) asparagine glycan is attached at N29. Residues 38–63 form a helical membrane-spanning segment; that stretch reads VSIPHGLFLSLGLVSLVENVLVVAAI. Topologically, residues 64 to 72 are cytoplasmic; sequence AKNRNLHSP. A helical membrane pass occupies residues 73 to 93; sequence MYCFICCLALSDLLVSGSNML. Residues 94 to 118 are Extracellular-facing; it reads ETAVILLLEAGALATRASVVQQLQN. A helical membrane pass occupies residues 119–140; sequence TIDVLTCSSMLCSLCFLGAIAV. Topologically, residues 141-163 are cytoplasmic; sequence DRYVSIFYALRYHSIVTLPRARR. Residues 164 to 183 form a helical membrane-spanning segment; sequence AIAAIWVASVLSSTLFIAYC. The Extracellular portion of the chain corresponds to 184-191; sequence DHAAVLLC. The chain crosses the membrane as a helical span at residues 192–211; it reads LVVFFLAMLVLMAVLYVHML. Residues 212-240 are Cytoplasmic-facing; the sequence is ARACQHAQGITRLHKRQLPAHQGFGLRGA. The helical transmembrane segment at 241–266 threads the bilayer; sequence ATLTILLGIFFLCWGPFFLHLMLVVL. Topologically, residues 267–279 are extracellular; it reads CPQHLTCSCIFKN. A helical transmembrane segment spans residues 280–300; it reads FKVFLTLIICNTIIDPLIYAF. The Cytoplasmic segment spans residues 301 to 317; the sequence is RSQELCRTLKEVLLCSW. A lipid anchor (S-palmitoyl cysteine) is attached at C315.

The protein belongs to the G-protein coupled receptor 1 family. Interacts with MGRN1, but does not undergo MGRN1-mediated ubiquitination; this interaction competes with GNAS-binding and thus inhibits agonist-induced cAMP production. Interacts with OPN3; the interaction results in a decrease in MC1R-mediated cAMP signaling and ultimately a decrease in melanin production in melanocytes.

The protein resides in the cell membrane. In terms of biological role, receptor for MSH (alpha, beta and gamma) and ACTH. The activity of this receptor is mediated by G proteins which activate adenylate cyclase. Mediates melanogenesis, the production of eumelanin (black/brown) and phaeomelanin (red/yellow), via regulation of cAMP signaling in melanocytes. In Alouatta caraya (Black howler monkey), this protein is Melanocyte-stimulating hormone receptor (MC1R).